A 140-amino-acid chain; its full sequence is Small ribosomal subunit protein uS12 (140 aa).

Residues 1–20 form a disordered region; that stretch reads MPTINQLVRKGRQSKVVKSD. Asp-102 carries the 3-methylthioaspartic acid modification. Residues 121 to 140 are disordered; it reads DGRMQGRSKYGTKRPKAAKK. The segment covering 130–140 has biased composition (basic residues); the sequence is YGTKRPKAAKK.

The protein belongs to the universal ribosomal protein uS12 family. As to quaternary structure, part of the 30S ribosomal subunit. Contacts proteins S8 and S17. May interact with IF1 in the 30S initiation complex.

With S4 and S5 plays an important role in translational accuracy. Functionally, interacts with and stabilizes bases of the 16S rRNA that are involved in tRNA selection in the A site and with the mRNA backbone. Located at the interface of the 30S and 50S subunits, it traverses the body of the 30S subunit contacting proteins on the other side and probably holding the rRNA structure together. The combined cluster of proteins S8, S12 and S17 appears to hold together the shoulder and platform of the 30S subunit. This chain is Small ribosomal subunit protein uS12, found in Exiguobacterium sibiricum (strain DSM 17290 / CCUG 55495 / CIP 109462 / JCM 13490 / 255-15).